The chain runs to 157 residues: Ribosome maturation factor RimP (157 aa).

The protein belongs to the RimP family.

The protein resides in the cytoplasm. Functionally, required for maturation of 30S ribosomal subunits. The polypeptide is Ribosome maturation factor RimP (Synechococcus sp. (strain CC9311)).